Here is a 139-residue protein sequence, read N- to C-terminus: Maximins 4/H3 type 6 (139 aa).

The N-terminal stretch at 1-18 is a signal peptide; it reads MNFKYIVAVSFLIASAYA. Positions 19–43 are excised as a propeptide; that stretch reads RSVQNDEQSLSQRDVLEEESLREIR. The residue at position 70 (asparagine 70) is an Asparagine amide. A propeptide spanning residues 74–118 is cleaved from the precursor; the sequence is TAEDHEVMKRLEAVMRDLDSLDHPEEASERETRGFNQDEIAKEKR. Isoleucine 138 is modified (isoleucine amide).

This sequence belongs to the bombinin family. As to expression, expressed by the skin glands.

The protein resides in the secreted. In terms of biological role, maximin-4 shows antibacterial activity against both Gram-positive and Gram-negative bacteria. It also shows antimicrobial activity against the fungus C.albicans, but not against A.flavus nor P.uticale. It has little hemolytic activity. It does not possess a significant cytotoxicity against tumor cell lines. It does not possess a significant anti-HIV activity. Its function is as follows. Maximin-H3 shows antibacterial activity against both Gram-positive and Gram-negative bacteria. It also shows antimicrobial activity against the fungus C.albicans. Shows strong hemolytic activity. The polypeptide is Maximins 4/H3 type 6 (Bombina maxima (Giant fire-bellied toad)).